Reading from the N-terminus, the 120-residue chain is Acyl carrier protein, mitochondrial (120 aa).

The 75-residue stretch at 43–117 (KEITDRVIGV…ETISYLRKTP (75 aa)) folds into the Carrier domain. At Ser-77 the chain carries O-(pantetheine 4'-phosphoryl)serine.

Belongs to the acyl carrier protein (ACP) family. In terms of assembly, complex I is composed of about 45 different subunits. Post-translationally, 4'-phosphopantetheine is transferred from CoA to a specific serine of apo-ACP by acpS. This modification is essential for activity because fatty acids are bound in thioester linkage to the sulfhydryl of the prosthetic group.

It localises to the mitochondrion. It participates in lipid metabolism; fatty acid biosynthesis. In terms of biological role, carrier of the growing fatty acid chain in fatty acid biosynthesis. May be involved in the synthesis of very-long-chain fatty acids. Accessory and non-catalytic subunit of the mitochondrial membrane respiratory chain NADH dehydrogenase (Complex I), which functions in the transfer of electrons from NADH to the respiratory chain. The polypeptide is Acyl carrier protein, mitochondrial (ndufab1) (Dictyostelium discoideum (Social amoeba)).